The following is an 898-amino-acid chain: MRKGVLKDPEIADLFYKDDPEELFIGLHEIGHGSFGAVYFATNAHTNEVVAIKKMSYSGKQTHEKWQDILKEVKFLRQLKHPNTIEYKGCYLKEHTAWLVMEYCLGSASDLLEVHKKPLQEVEIAAITHGALHGLAYLHSHALIHRDIKAGNILLTEPGQVKLADFGSASVASPANSFVGTPYWMAPEVILAMDEGQYDGKVDVWSLGITCIELAERKPALFNMNAMSALYHIAQNDSPTLQSNEWTDSFRRFVDYCLQKIPQERPTSAELLRHDFVRRDRPLRVLIDLIQRTKDAVRELDNLQYRKMKKILFQETRNGPLNESQEDEEDSEHGTSLNREMDSLGSNHSIPSMSVSTGSQSSSVNSMQEVMDESSSELVMMHDDESTINSSSSVVHKKDHVFIRDEAGHGDPRPEPRPTQSVQSQALHYRNRERFATIKSASLVTRQIHEHEQENELREQMSGYKRMRRQHQKQLIALENKLKAEMDEHRLKLQKEVETHANNSSIELEKLAKKQVAIIEKEAKVAAADEKKFQQQILAQQKKDLTTFLESQKKQYKICKEKIKEEMNEDHSTPKKEKQERISKHKENLQHTQAEEEAHLLTQQRLYYDKNCRFFKRKIMIKRHEVEQQNIREELNKKRTQKEMEHAMLIRHDESTRELEYRQLHTLQKLRMDLIRLQHQTELENQLEYNKRRERELHRKHVMELRQQPKNLKAMEMQIKKQFQDTCKVQTKQYKALKNHQLEVTPKNEHKTILKTLKDEQTRKLAILAEQYEQSINEMMASQALRLDEAQEAECQALRLQLQQEMELLNAYQSKIKMQTEAQHERELQKLEQRVSLRRAHLEQKIEEELAALQKERSERIKNLLERQEREIETFDMESLRMGFGNLVTLDFPKEDYR.

The Protein kinase domain occupies Phe24–Val277. ATP contacts are provided by residues Ile30–Val38 and Lys53. Asp147 serves as the catalytic Proton acceptor. Disordered stretches follow at residues Thr316–Ser362 and Asp405–Gln425. Position 324 is a phosphoserine; by ATM (Ser324). Ser331, Ser343, Ser346, and Ser349 each carry phosphoserine. The segment covering Gly334–Pro351 has biased composition (polar residues). Residues Ser352–Ser362 are compositionally biased toward low complexity. Thr357 is subject to Phosphothreonine. Ser359 bears the Phosphoserine mark. Residues Asp405–Pro416 are compositionally biased toward basic and acidic residues. Ser442 is modified (phosphoserine). 3 coiled-coil regions span residues Glu452–Asn502, Phe548–Leu649, and Leu754–Ser879. The interval Glu565–Glu596 is disordered. At Lys830 the chain carries N6-acetyllysine.

Belongs to the protein kinase superfamily. STE Ser/Thr protein kinase family. STE20 subfamily. In terms of assembly, self-associates. Interacts with ERN1 and TRAF2. Interaction with TRAF2 is facilitated under ER stress conditions, such as treatment with tunicamycin, and may promote TRAF2 phosphorylation. Interacts (via N-terminus) with STK25; the interaction promotes STK25 abundance at the level of protein expression and/or stability. Autophosphorylated. Phosphorylation at Ser-324 by ATM following DNA damage is required for activation of the p38/MAPK14 stress-activated MAPK cascade. Phosphorylated at Ser-324 and on Tyr residues during T cell activation. Phosphorylated by LRRK2.

It is found in the cytoplasm. The protein resides in the cell membrane. Its subcellular location is the membrane raft. The protein localises to the lipid droplet. It catalyses the reaction L-seryl-[protein] + ATP = O-phospho-L-seryl-[protein] + ADP + H(+). The catalysed reaction is L-threonyl-[protein] + ATP = O-phospho-L-threonyl-[protein] + ADP + H(+). In terms of biological role, serine/threonine-protein kinase that acts as a regulator of the p38/MAPK14 stress-activated MAPK cascade and of the MAPK8/JNK cascade. In response to DNA damage, involved in the G2/M transition DNA damage checkpoint by activating the p38/MAPK14 stress-activated MAPK cascade, probably by mediating phosphorylation of upstream MAP2K3 and MAP2K6 kinases. Inhibits basal activity of the MAPK8/JNK cascade and diminishes its activation in response to epidermal growth factor (EGF). Positively regulates canonical T cell receptor (TCR) signaling by preventing early PTPN6/SHP1-mediated inactivation of LCK, ensuring sustained TCR signaling that is required for optimal activation and differentiation of T cells. Phosphorylates PTPN6/SHP1 on 'Thr-394', leading to its polyubiquitination and subsequent proteasomal degradation. Required for cell surface expression of metalloprotease ADAM10 on type 1 transitional B cells which is necessary for their NOTCH-mediated development into marginal zone B cells. Also required for the NOTCH-mediated terminal differentiation of splenic conventional type 2 dendritic cells. Positively regulates osteoblast differentiation by acting as an upstream activator of the JNK pathway. Promotes JNK signaling in hepatocytes and positively regulates hepatocyte lipid storage by inhibiting beta-oxidation and triacylglycerol secretion while enhancing lipid synthesis. Restricts age-associated inflammation by negatively regulating differentiation of macrophages and their production of pro-inflammatory cytokines. Plays a role in negatively regulating the abundance of regulatory T cells in white adipose tissue. This is Serine/threonine-protein kinase TAO3 (TAOK3) from Pongo abelii (Sumatran orangutan).